The following is an 83-amino-acid chain: RNA-binding protein Hfq (83 aa).

In terms of domain architecture, Sm spans 9–68 (DPYLNALRKERIPVSIFLVNGIKLQGQIESFDQFVILLKNTVSQMVYKHAISTVVPARNV).

Belongs to the Hfq family. In terms of assembly, homohexamer.

Functionally, RNA chaperone that binds small regulatory RNA (sRNAs) and mRNAs to facilitate mRNA translational regulation in response to envelope stress, environmental stress and changes in metabolite concentrations. Also binds with high specificity to tRNAs. This chain is RNA-binding protein Hfq, found in Marinobacter nauticus (strain ATCC 700491 / DSM 11845 / VT8) (Marinobacter aquaeolei).